We begin with the raw amino-acid sequence, 861 residues long: DNA mismatch repair protein MutS (861 aa).

An ATP-binding site is contributed by 613–620 (GPNMGGKS).

The protein belongs to the DNA mismatch repair MutS family.

Its function is as follows. This protein is involved in the repair of mismatches in DNA. It is possible that it carries out the mismatch recognition step. This protein has a weak ATPase activity. This Dichelobacter nodosus (strain VCS1703A) protein is DNA mismatch repair protein MutS.